The following is a 277-amino-acid chain: F420-dependent methylenetetrahydromethanopterin dehydrogenase (277 aa).

The protein belongs to the MTD family.

The catalysed reaction is 5,10-methylenetetrahydromethanopterin + oxidized coenzyme F420-(gamma-L-Glu)(n) + 2 H(+) = 5,10-methenyl-5,6,7,8-tetrahydromethanopterin + reduced coenzyme F420-(gamma-L-Glu)(n). Its pathway is one-carbon metabolism; methanogenesis from CO(2); 5,10-methylene-5,6,7,8-tetrahydromethanopterin from 5,10-methenyl-5,6,7,8-tetrahydromethanopterin (coenzyme F420 route): step 1/1. Catalyzes the reversible reduction of methenyl-H(4)MPT(+) to methylene-H(4)MPT. The polypeptide is F420-dependent methylenetetrahydromethanopterin dehydrogenase (Methanococcus maripaludis (strain C5 / ATCC BAA-1333)).